The chain runs to 292 residues: tRNA dimethylallyltransferase (292 aa).

An ATP-binding site is contributed by 5–12 (APTGAGKT). 7-12 (TGAGKT) contributes to the substrate binding site. The interval 29–32 (DSRQ) is interaction with substrate tRNA.

This sequence belongs to the IPP transferase family. Monomer. The cofactor is Mg(2+).

It catalyses the reaction adenosine(37) in tRNA + dimethylallyl diphosphate = N(6)-dimethylallyladenosine(37) in tRNA + diphosphate. Its function is as follows. Catalyzes the transfer of a dimethylallyl group onto the adenine at position 37 in tRNAs that read codons beginning with uridine, leading to the formation of N6-(dimethylallyl)adenosine (i(6)A). The sequence is that of tRNA dimethylallyltransferase from Leptospira borgpetersenii serovar Hardjo-bovis (strain JB197).